The primary structure comprises 815 residues: Probable beta-glucosidase G (815 aa).

The first 20 residues, Met-1 to Gly-20, serve as a signal peptide directing secretion. Residues Asn-40, Asn-58, Asn-229, and Asn-276 are each glycosylated (N-linked (GlcNAc...) asparagine). Asp-304 is an active-site residue. N-linked (GlcNAc...) asparagine glycans are attached at residues Asn-343, Asn-350, Asn-402, Asn-507, Asn-563, Asn-584, Asn-623, Asn-662, and Asn-715.

The protein belongs to the glycosyl hydrolase 3 family.

It is found in the secreted. The enzyme catalyses Hydrolysis of terminal, non-reducing beta-D-glucosyl residues with release of beta-D-glucose.. The protein operates within glycan metabolism; cellulose degradation. Functionally, beta-glucosidases are one of a number of cellulolytic enzymes involved in the degradation of cellulosic biomass. Catalyzes the last step releasing glucose from the inhibitory cellobiose. This chain is Probable beta-glucosidase G (bglG), found in Aspergillus flavus (strain ATCC 200026 / FGSC A1120 / IAM 13836 / NRRL 3357 / JCM 12722 / SRRC 167).